The following is an 82-amino-acid chain: Protein Rv1078A (82 aa).

Residues 35-54 (GGPTRRLRRRPAVTRRRRPD) show a composition bias toward basic residues. Residues 35–82 (GGPTRRLRRRPAVTRRRRPDRRFVRCRPSPTRRGLPGCWRHSSTGPHT) are disordered.

The protein resides in the cytoplasm. This chain is Protein Rv1078A, found in Mycobacterium tuberculosis (strain ATCC 25618 / H37Rv).